The following is a 213-amino-acid chain: uncharacterized protein (213 aa).

This is an uncharacterized protein from Acanthamoeba polyphaga (Amoeba).